Reading from the N-terminus, the 394-residue chain is Cytochrome b (394 aa).

Transmembrane regions (helical) follow at residues 39-59 (FGSL…FLAM), 83-105 (WLLR…LHTF), 120-140 (VWCL…IGYV), and 186-206 (FFSL…LHLA). Heme b is bound by residues histidine 89 and histidine 103. Residues histidine 191 and histidine 204 each coordinate heme b. Histidine 209 is an a ubiquinone binding site. Helical transmembrane passes span 232 to 252 (FYVK…IWIF), 296 to 316 (AGGV…PFFK), 328 to 348 (IYQG…WIGC), and 355 to 374 (FVTI…AITP).

It belongs to the cytochrome b family. In terms of assembly, the main subunits of complex b-c1 are: cytochrome b, cytochrome c1 and the Rieske protein. The cofactor is heme b.

It localises to the mitochondrion inner membrane. Functionally, component of the ubiquinol-cytochrome c reductase complex (complex III or cytochrome b-c1 complex) that is part of the mitochondrial respiratory chain. The b-c1 complex mediates electron transfer from ubiquinol to cytochrome c. Contributes to the generation of a proton gradient across the mitochondrial membrane that is then used for ATP synthesis. This chain is Cytochrome b (MT-CYB), found in Oenothera berteroana (Bertero's evening primrose).